Here is a 93-residue protein sequence, read N- to C-terminus: Small ribosomal subunit protein uS19 (93 aa).

Belongs to the universal ribosomal protein uS19 family.

Protein S19 forms a complex with S13 that binds strongly to the 16S ribosomal RNA. The protein is Small ribosomal subunit protein uS19 of Clavibacter michiganensis subsp. michiganensis (strain NCPPB 382).